Here is a 913-residue protein sequence, read N- to C-terminus: Protein translocase subunit SecA (913 aa).

ATP-binding positions include Gln87, 105 to 109 (GEGKT), and Asp517. Disordered stretches follow at residues 568–588 (ESRR…DPGS) and 871–913 (EVAV…GKLS). Residues Cys897, Cys899, Cys908, and His909 each contribute to the Zn(2+) site. The span at 903–913 (KKYKQCHGKLS) shows a compositional bias: basic residues.

The protein belongs to the SecA family. As to quaternary structure, monomer and homodimer. Part of the essential Sec protein translocation apparatus which comprises SecA, SecYEG and auxiliary proteins SecDF-YajC and YidC. The cofactor is Zn(2+).

The protein localises to the cell inner membrane. It is found in the cytoplasm. It carries out the reaction ATP + H2O + cellular proteinSide 1 = ADP + phosphate + cellular proteinSide 2.. Functionally, part of the Sec protein translocase complex. Interacts with the SecYEG preprotein conducting channel. Has a central role in coupling the hydrolysis of ATP to the transfer of proteins into and across the cell membrane, serving both as a receptor for the preprotein-SecB complex and as an ATP-driven molecular motor driving the stepwise translocation of polypeptide chains across the membrane. In Coxiella burnetii (strain RSA 493 / Nine Mile phase I), this protein is Protein translocase subunit SecA.